Consider the following 205-residue polypeptide: RNA pyrophosphohydrolase (205 aa).

The 144-residue stretch at 6 to 149 (GFRPNVGIVL…KRGVYARALR (144 aa)) folds into the Nudix hydrolase domain. The Nudix box signature appears at 38–59 (GGMNTDETPVEAMYRELREETG). The interval 177 to 205 (PGSSAAGHDSPRKRPRKRSGARPMRINND) is disordered. Residues 187–196 (PRKRPRKRSG) are compositionally biased toward basic residues.

It belongs to the Nudix hydrolase family. RppH subfamily. A divalent metal cation serves as cofactor.

Functionally, accelerates the degradation of transcripts by removing pyrophosphate from the 5'-end of triphosphorylated RNA, leading to a more labile monophosphorylated state that can stimulate subsequent ribonuclease cleavage. The polypeptide is RNA pyrophosphohydrolase (Xanthomonas oryzae pv. oryzae (strain MAFF 311018)).